Consider the following 456-residue polypeptide: Adenylosuccinate lyase (456 aa).

Residues 15–16 (RY), 90–92 (NHD), and 122–123 (TS) each bind N(6)-(1,2-dicarboxyethyl)-AMP. H171 serves as the catalytic Proton donor/acceptor. Q247 contributes to the N(6)-(1,2-dicarboxyethyl)-AMP binding site. The Proton donor/acceptor role is filled by S295. N(6)-(1,2-dicarboxyethyl)-AMP contacts are provided by residues S296, 301–303 (KVN), N309, R335, and 340–344 (STVLR).

The protein belongs to the lyase 1 family. Adenylosuccinate lyase subfamily. As to quaternary structure, homotetramer. Residues from neighboring subunits contribute catalytic and substrate-binding residues to each active site.

It catalyses the reaction N(6)-(1,2-dicarboxyethyl)-AMP = fumarate + AMP. The enzyme catalyses (2S)-2-[5-amino-1-(5-phospho-beta-D-ribosyl)imidazole-4-carboxamido]succinate = 5-amino-1-(5-phospho-beta-D-ribosyl)imidazole-4-carboxamide + fumarate. Its pathway is purine metabolism; AMP biosynthesis via de novo pathway; AMP from IMP: step 2/2. It functions in the pathway purine metabolism; IMP biosynthesis via de novo pathway; 5-amino-1-(5-phospho-D-ribosyl)imidazole-4-carboxamide from 5-amino-1-(5-phospho-D-ribosyl)imidazole-4-carboxylate: step 2/2. Functionally, catalyzes two reactions in de novo purine nucleotide biosynthesis. Catalyzes the breakdown of 5-aminoimidazole- (N-succinylocarboxamide) ribotide (SAICAR or 2-[5-amino-1-(5-phospho-beta-D-ribosyl)imidazole-4-carboxamido]succinate) to 5-aminoimidazole-4-carboxamide ribotide (AICAR or 5-amino-1-(5-phospho-beta-D-ribosyl)imidazole-4-carboxamide) and fumarate, and of adenylosuccinate (ADS or N(6)-(1,2-dicarboxyethyl)-AMP) to adenosine monophosphate (AMP) and fumarate. The polypeptide is Adenylosuccinate lyase (purB) (Haemophilus influenzae (strain ATCC 51907 / DSM 11121 / KW20 / Rd)).